The primary structure comprises 229 residues: Aminopyrimidine aminohydrolase (229 aa).

Asp-44 is a substrate binding site. The active-site Nucleophile is Cys-137. Positions 141 and 167 each coordinate substrate. Catalysis depends on Glu-208, which acts as the Proton donor.

Belongs to the TenA family. As to quaternary structure, homotetramer.

The catalysed reaction is 4-amino-5-aminomethyl-2-methylpyrimidine + H2O = 4-amino-5-hydroxymethyl-2-methylpyrimidine + NH4(+). The enzyme catalyses thiamine + H2O = 5-(2-hydroxyethyl)-4-methylthiazole + 4-amino-5-hydroxymethyl-2-methylpyrimidine + H(+). The protein operates within cofactor biosynthesis; thiamine diphosphate biosynthesis. Functionally, catalyzes an amino-pyrimidine hydrolysis reaction at the C5' of the pyrimidine moiety of thiamine compounds, a reaction that is part of a thiamine salvage pathway. Thus, catalyzes the conversion of 4-amino-5-aminomethyl-2-methylpyrimidine to 4-amino-5-hydroxymethyl-2-methylpyrimidine (HMP). Is also able to catalyze the hydrolytic cleavage of thiamine; however, this thiaminase activity may not be physiologically relevant. Therefore, is probably involved in the regeneration of the thiamine pyrimidine from thiamine degraded products present in the environment, rather than in thiamine degradation. The polypeptide is Aminopyrimidine aminohydrolase (Staphylococcus aureus (strain MRSA252)).